The primary structure comprises 235 residues: MSDLVFYDVASTGANGFDPDAGYMDFCVKNAESLNLAAVRIFFLNAAKAKAALSRKPERKANPKFGEWQVEVINNHFPGNRNNPIGNNDLTIHRLSGYLARWVLDQYNENDDESQHELIRTTIINPIAESNGVGWDSGPEIYLSFFPGTEMFLETFKFYPLTIGIHRVKQGMMDPQYLKKALRQRYGTLTADKWMSQKVAAIAKSLKDVEQLKWGKGGLSDTAKTFLQKFGIRLP.

RNA contacts are provided by Phe-17, Asp-18, Ala-47, Lys-50, Asn-75, His-76, Arg-81, Arg-94, Ile-124, Pro-126, Glu-129, Arg-167, Tyr-177, Lys-179, Lys-180, Arg-183, Gln-184, and Arg-185.

The protein belongs to the orthobunyavirus nucleocapsid protein family. Homotetramer. Binds the viral genomic RNA. Interacts with host PABP1.

It localises to the virion. Encapsidates the genome protecting it from nucleases. The encapsidated genomic RNA is termed the nucleocapsid (NC) and serves as template for transcription and replication. The NC have a helical organization. Seems to participate in the nuclear relocalization of host PABP1, thereby inhibiting host cellular translation. This chain is Nucleoprotein (N), found in Cervidae (Deer).